Consider the following 647-residue polypeptide: Macrolide export ATP-binding/permease protein MacB (647 aa).

The ABC transporter domain maps to 5–243 (LELKGIERSY…TQTPSLTSKI (239 aa)). 41-48 (GASGSGKS) contacts ATP. 4 helical membrane-spanning segments follow: residues 272–292 (LLTM…LVIG), 522–542 (LFLT…VMNI), 576–596 (ILVC…IAFI), and 610–630 (PIAL…FGFL).

This sequence belongs to the ABC transporter superfamily. Macrolide exporter (TC 3.A.1.122) family. As to quaternary structure, homodimer. Part of the tripartite efflux system MacAB-TolC, which is composed of an inner membrane transporter, MacB, a periplasmic membrane fusion protein, MacA, and an outer membrane component, TolC. The complex forms a large protein conduit and can translocate molecules across both the inner and outer membranes. Interacts with MacA.

The protein localises to the cell inner membrane. Part of the tripartite efflux system MacAB-TolC. MacB is a non-canonical ABC transporter that contains transmembrane domains (TMD), which form a pore in the inner membrane, and an ATP-binding domain (NBD), which is responsible for energy generation. Confers resistance against macrolides. The protein is Macrolide export ATP-binding/permease protein MacB of Photorhabdus laumondii subsp. laumondii (strain DSM 15139 / CIP 105565 / TT01) (Photorhabdus luminescens subsp. laumondii).